The sequence spans 957 residues: Isoleucine--tRNA ligase (957 aa).

Positions 57–67 (PYANGDIHIGH) match the 'HIGH' region motif. Glu594 contacts L-isoleucyl-5'-AMP. Positions 635 to 639 (KMSKS) match the 'KMSKS' region motif. Position 638 (Lys638) interacts with ATP. Zn(2+)-binding residues include Cys920, Cys923, Cys940, and Cys943.

Belongs to the class-I aminoacyl-tRNA synthetase family. IleS type 1 subfamily. As to quaternary structure, monomer. Zn(2+) is required as a cofactor.

The protein localises to the cytoplasm. The enzyme catalyses tRNA(Ile) + L-isoleucine + ATP = L-isoleucyl-tRNA(Ile) + AMP + diphosphate. Functionally, catalyzes the attachment of isoleucine to tRNA(Ile). As IleRS can inadvertently accommodate and process structurally similar amino acids such as valine, to avoid such errors it has two additional distinct tRNA(Ile)-dependent editing activities. One activity is designated as 'pretransfer' editing and involves the hydrolysis of activated Val-AMP. The other activity is designated 'posttransfer' editing and involves deacylation of mischarged Val-tRNA(Ile). In Laribacter hongkongensis (strain HLHK9), this protein is Isoleucine--tRNA ligase.